The primary structure comprises 434 residues: Neuropeptide receptor 22 (434 aa).

Residues 1 to 55 (MDEGGGIGSSLLSRITTTASEIMMRNEPTTTENPAVQEMNHIYHLTPSMKMLCIL) lie on the Extracellular side of the membrane. Residues 56-76 (FYSILCVCCVYGNVLVILVIV) traverse the membrane as a helical segment. The Cytoplasmic portion of the chain corresponds to 77-86 (YFKRLRTATN). A helical membrane pass occupies residues 87-107 (ILILNLAVADLLISVFCIPFS). Residues 108-128 (YWQVLIYDDQRWLFGSMMCSL) are Extracellular-facing. A disulfide bridge links cysteine 126 with cysteine 204. A helical transmembrane segment spans residues 129–149 (LAFLQAMAVFLSAWTLVVISF). The Cytoplasmic segment spans residues 150 to 169 (DRWMAIMFLLTPNIRITRRR). The helical transmembrane segment at 170–190 (ALYLVAATWIFSILMALPLLF) threads the bilayer. Over 191 to 226 (TTRFFEDQDGLPNCGENWTYFGDSGEQVRKVYSSMV) the chain is Extracellular. Residue asparagine 207 is glycosylated (N-linked (GlcNAc...) asparagine). Residues 227 to 247 (LILQYVVPQAVLIITYTHIGI) form a helical membrane-spanning segment. The Cytoplasmic portion of the chain corresponds to 248–277 (KMWNSRVPGMQNGATKKMIVDRHESVKKLV). Residues 278–298 (PMVILISALFALCWLPLLILI) traverse the membrane as a helical segment. The Extracellular portion of the chain corresponds to 299 to 310 (NVIPEFYPDINS). The helical transmembrane segment at 311–331 (WGYILYLWWFAHGLAMSHSMV) threads the bilayer. The Cytoplasmic segment spans residues 332 to 434 (NPIIYFIRNA…VRNNSANSLA (103 aa)).

The protein belongs to the G-protein coupled receptor 1 family. Expressed in many cells, mainly in the head region, with expression detected in the head muscles, I2 neurons, MC neurons, RIH neuron, AIA neurons, AUA neurons, ASK neurons, ASI neurons, a few B-type motorneurons in the posterior ventral nerve cord, pharyngeal muscles, body wall muscles, the intestine and a few classes of unidentified cells anterior to the nerve ring. Expression in the MC neurons is important to mediate suppression of feeding while expression in the RIH neuron is important for the facilitation of egg-laying. No expression detected in other tissues including hypodermis.

The protein resides in the cell membrane. Functionally, receptor for the LURY-1-1 and LURY-1-2 peptides which control food-related processes including feeding, lifespan, egg-laying and roaming behavior. Receptor for flp-7 which stimulates serotonin-induced fat loss. Serotonin induces secretion of flp-7 from neurons and binding to npr-22 which leads to induction of the atgp-1 lipase and subsequent fat loss. Acts in vitro as a receptor for the flp-7 FMRFamide-like neuropeptides TPMQRSSMVRF-amide, SPMQRSSMVRF-amide, SPMERSAMVRF-amide and SPMDRSKMVRF-amide. Also acts in vitro as a receptor for a number of other FMRFamide-like neuropeptides including the flp-1 neuropeptide PNFMRY-amide, the flp-9 neuropeptide KPSFVRF-amide, the flp-11 neuropeptides AMRNALVRF-amide, ASGGMRNALVRF-amide and NGAPQPFVRF-amide, the flp-13 neuropeptides AADGAPLIRF-amide, ASPSAPLIRF-amide, SPSAVPLIRF-amide, SAAAPLIRF-amide and ASSAPLIRF-amide, and the flp-22 neuropeptide SPSAKWMRF-amide. The SPMERSAMVRF-amide neuropeptide from flp-7 acts as the strongest in vitro activator of npr-22. This chain is Neuropeptide receptor 22, found in Caenorhabditis elegans.